The chain runs to 1302 residues: Neuroglian (1302 aa).

The N-terminal stretch at 1–23 (MWRQSTILAALLVALLCAGSAES) is a signal peptide. Residues 24–1138 (KGNRPPRITK…ANAGWFIGMM (1115 aa)) are Extracellular-facing. Ig-like C2-type domains lie at 29-133 (PRIT…AELN), 134-225 (AFKD…YKIG), 245-330 (PPVR…QSFS), 339-426 (PYFT…VYLN), 432-524 (PTIS…TRIT), and 521-610 (TRIT…ANLI). 4 disulfides stabilise this stretch: Cys-59–Cys-111, Cys-155–Cys-212, Cys-268–Cys-317, and Cys-360–Cys-410. N-linked (GlcNAc...) asparagine glycans are attached at residues Asn-182 and Asn-198. N-linked (GlcNAc...) asparagine glycosylation is found at Asn-411 and Asn-448. 5 Fibronectin type-III domains span residues 614 to 711 (VPNA…TQPD), 716 to 813 (NPDN…SGED), 818 to 915 (APTN…TPEG), 916 to 1017 (VPSP…LKDA), and 1021 to 1119 (APAT…TVEG). Cysteines 625 and 706 form a disulfide. N-linked (GlcNAc...) asparagine glycans are attached at residues Asn-652 and Asn-683. A glycan (N-linked (GlcNAc...) asparagine) is linked at Asn-821. Asn-1125 carries an N-linked (GlcNAc...) asparagine glycan. The chain crosses the membrane as a helical span at residues 1139–1154 (LALAFIIILFIIICII). Topologically, residues 1155-1302 (RRNRGGKYDV…AAAGAVATYV (148 aa)) are cytoplasmic. Over residues 1172–1182 (GRRDYPEEGGF) the composition is skewed to basic and acidic residues. Disordered regions lie at residues 1172 to 1223 (GRRD…GDTG) and 1236 to 1291 (VPGK…ASNG). Over residues 1188–1203 (PLDNKSAGRQSVSSAN) the composition is skewed to polar residues. Residues 1253–1275 (AAAHQAAPTAGGSGAAGSAAAAG) are compositionally biased toward low complexity.

As to quaternary structure, forms a complex with Nrx-IV/Nrx and Cont. Forms a complex composed of septate junction proteins Nrx-IV/Nrx, Tsf2/MTf, Cont and Nrg during late embryogenesis. Restricted to the surface of neurons and glia in the developing nervous system. As to expression, restricted to non-neuronal tissues.

The protein resides in the cell membrane. The protein localises to the cell junction. Its subcellular location is the septate junction. Essential for septate junctions. Septate junctions, which are the equivalent of vertebrate tight junctions, are characterized by regular arrays of transverse structures that span the intermembrane space and form a physical barrier to diffusion. Required for formation of the hemolymph-brain barrier (the insect blood-brain barrier). Vital for embryonic development. Involved in the targeting for degradation or recycling of certain septate junction components, including kune and bou/boudin, by regulating their endocytosis. Functionally, may play a role in neural and glial cell adhesion in the developing embryo. In terms of biological role, may be a more general cell adhesion molecule involved in non-neuronal tissues and imaginal disk morphogenesis. The polypeptide is Neuroglian (Nrg) (Drosophila melanogaster (Fruit fly)).